Reading from the N-terminus, the 331-residue chain is UPF0324 membrane protein SACOL0411 (331 aa).

Helical transmembrane passes span phenylalanine 9–alanine 26, isoleucine 31–tyrosine 48, leucine 69–glycine 88, leucine 93–leucine 115, alanine 122–phenylalanine 144, serine 154–phenylalanine 176, tyrosine 183–glycine 202, leucine 217–methionine 234, isoleucine 247–proline 269, leucine 273–valine 295, and leucine 308–tyrosine 330.

It belongs to the UPF0324 family.

It is found in the cell membrane. The protein is UPF0324 membrane protein SACOL0411 of Staphylococcus aureus (strain COL).